A 400-amino-acid chain; its full sequence is Phosphoribosylamine--glycine ligase (400 aa).

One can recognise an ATP-grasp domain in the interval K99–R303. Position 125–186 (I125–S186) interacts with ATP. Mg(2+) contacts are provided by E273 and N275.

This sequence belongs to the GARS family. Requires Mg(2+) as cofactor. It depends on Mn(2+) as a cofactor.

It catalyses the reaction 5-phospho-beta-D-ribosylamine + glycine + ATP = N(1)-(5-phospho-beta-D-ribosyl)glycinamide + ADP + phosphate + H(+). It functions in the pathway purine metabolism; IMP biosynthesis via de novo pathway; N(1)-(5-phospho-D-ribosyl)glycinamide from 5-phospho-alpha-D-ribose 1-diphosphate: step 2/2. This Thermotoga maritima (strain ATCC 43589 / DSM 3109 / JCM 10099 / NBRC 100826 / MSB8) protein is Phosphoribosylamine--glycine ligase.